We begin with the raw amino-acid sequence, 348 residues long: UDP-3-O-acylglucosamine N-acyltransferase (348 aa).

Residue His-257 is the Proton acceptor of the active site.

It belongs to the transferase hexapeptide repeat family. LpxD subfamily. In terms of assembly, homotrimer.

It carries out the reaction a UDP-3-O-[(3R)-3-hydroxyacyl]-alpha-D-glucosamine + a (3R)-hydroxyacyl-[ACP] = a UDP-2-N,3-O-bis[(3R)-3-hydroxyacyl]-alpha-D-glucosamine + holo-[ACP] + H(+). It functions in the pathway bacterial outer membrane biogenesis; LPS lipid A biosynthesis. Functionally, catalyzes the N-acylation of UDP-3-O-acylglucosamine using 3-hydroxyacyl-ACP as the acyl donor. Is involved in the biosynthesis of lipid A, a phosphorylated glycolipid that anchors the lipopolysaccharide to the outer membrane of the cell. The polypeptide is UDP-3-O-acylglucosamine N-acyltransferase (Bartonella quintana (strain Toulouse) (Rochalimaea quintana)).